Here is a 284-residue protein sequence, read N- to C-terminus: Nucleotide-binding protein Sbal223_0704 (284 aa).

Residue 8 to 15 (GRSGSGKS) coordinates ATP. 56 to 59 (DVRN) lines the GTP pocket.

This sequence belongs to the RapZ-like family.

In terms of biological role, displays ATPase and GTPase activities. The polypeptide is Nucleotide-binding protein Sbal223_0704 (Shewanella baltica (strain OS223)).